We begin with the raw amino-acid sequence, 637 residues long: MTLLDSVHNPDDLKKLPDSQLPQLAAEIREFLISQVARTGGHLGPNLGVVELTIALHRVFDSPRDPILFDTGHQAYVHKILTGRKDFSKLRKEGGLSGYPSRAESEHDFIENSHASTALSYADGLARAYELQGITDRTVVALVGDGALTGGMAWEALNNIAEGKNRRIVIVVNDNGRSYSPTIGGLAEHFANLRMTRGYEQMLATAKNAINRAPVVGPPLYDALHAFKKGLKDAIQPQMMFEDLGLKYVGPIDGHDVAAVERALRRARDFGAPVIVHVLTQKGKGYAPAENHDEDQFHALGAFDVATGRPQSTPGLKWTSVFSDEMVRIGAEREDVVAITAAMLHPTGLAAFAEAYPDRVFDVGIAEQHAATCAAGLAMGGLHPVVAVYATFLNRCFDQVLMDVALHRQPVTFALDRAGITGDDGASHNGMWDLSILQVVPNLSIAVPRDAVRLRELLREAISIDDGPTVVRYPKGVVPPAIPAVDQIGGMDVLRRPASGTEAPDLLLVAVGPMAQTCCEVADRLADQGIGVTVVDPRWVKPLDPALVSEAARHSVVAVVEDNGRVGAVGDAVARALRDADLDIPVRTFGIEQRFLEHAKRDRILAQMGLDAQGLARKLTEIVAQRAEQSLEDEPAS.

Thiamine diphosphate contacts are provided by residues histidine 73 and 113–115 (SHA). Aspartate 145 lines the Mg(2+) pocket. Residues 146-147 (GA), asparagine 175, tyrosine 286, and glutamate 367 each bind thiamine diphosphate. Asparagine 175 provides a ligand contact to Mg(2+).

The protein belongs to the transketolase family. DXPS subfamily. Homodimer. Mg(2+) serves as cofactor. Requires thiamine diphosphate as cofactor.

It carries out the reaction D-glyceraldehyde 3-phosphate + pyruvate + H(+) = 1-deoxy-D-xylulose 5-phosphate + CO2. The protein operates within metabolic intermediate biosynthesis; 1-deoxy-D-xylulose 5-phosphate biosynthesis; 1-deoxy-D-xylulose 5-phosphate from D-glyceraldehyde 3-phosphate and pyruvate: step 1/1. Catalyzes the acyloin condensation reaction between C atoms 2 and 3 of pyruvate and glyceraldehyde 3-phosphate to yield 1-deoxy-D-xylulose-5-phosphate (DXP). This is 1-deoxy-D-xylulose-5-phosphate synthase from Thermobifida fusca (strain YX).